The sequence spans 303 residues: MIYTSLAGELQSLVKGSIQINEPMRKHTTWKIGGKADLFLNPSDKEDIRQAVEFAREKAIPITVIGNGSNLLVKDGGIRGLVIKVGRGMAKITIEGTSIKAGAGALLPELAVFACKNSLGGFGFAAGIPGSLGGAIVMNAGAMNGCVSDVLQSIVVLNERNQFEVLTKDHLNFAYRTSNLQSRGLICVETCWQGYAKDQWLIEQETKEYLAKRKAAQPQGFPNAGSVFKNPEGDFAGRLIEGCGGKGLRVGDAEVSSKHANWILNLGRATAQDVLILIDHLKQMVQERFGVLLQLEVKVLGED.

The FAD-binding PCMH-type domain occupies 32 to 212 (IGGKADLFLN…EQETKEYLAK (181 aa)). Arg176 is an active-site residue. The Proton donor role is filled by Ser226. Glu296 is an active-site residue.

This sequence belongs to the MurB family. It depends on FAD as a cofactor.

Its subcellular location is the cytoplasm. It carries out the reaction UDP-N-acetyl-alpha-D-muramate + NADP(+) = UDP-N-acetyl-3-O-(1-carboxyvinyl)-alpha-D-glucosamine + NADPH + H(+). Its pathway is cell wall biogenesis; peptidoglycan biosynthesis. Its function is as follows. Cell wall formation. This chain is UDP-N-acetylenolpyruvoylglucosamine reductase, found in Desulforamulus reducens (strain ATCC BAA-1160 / DSM 100696 / MI-1) (Desulfotomaculum reducens).